The following is a 362-amino-acid chain: Chorismate synthase (362 aa).

NADP(+)-binding residues include Arg48 and Arg54. FMN-binding positions include 125–127, 238–239, Gly286, 301–305, and Arg327; these read RSS, NA, and KPTSS.

It belongs to the chorismate synthase family. Homotetramer. It depends on FMNH2 as a cofactor.

It catalyses the reaction 5-O-(1-carboxyvinyl)-3-phosphoshikimate = chorismate + phosphate. The protein operates within metabolic intermediate biosynthesis; chorismate biosynthesis; chorismate from D-erythrose 4-phosphate and phosphoenolpyruvate: step 7/7. Its function is as follows. Catalyzes the anti-1,4-elimination of the C-3 phosphate and the C-6 proR hydrogen from 5-enolpyruvylshikimate-3-phosphate (EPSP) to yield chorismate, which is the branch point compound that serves as the starting substrate for the three terminal pathways of aromatic amino acid biosynthesis. This reaction introduces a second double bond into the aromatic ring system. This is Chorismate synthase from Granulibacter bethesdensis (strain ATCC BAA-1260 / CGDNIH1).